The sequence spans 177 residues: ATP synthase subunit delta (177 aa).

Belongs to the ATPase delta chain family. F-type ATPases have 2 components, F(1) - the catalytic core - and F(0) - the membrane proton channel. F(1) has five subunits: alpha(3), beta(3), gamma(1), delta(1), epsilon(1). F(0) has three main subunits: a(1), b(2) and c(10-14). The alpha and beta chains form an alternating ring which encloses part of the gamma chain. F(1) is attached to F(0) by a central stalk formed by the gamma and epsilon chains, while a peripheral stalk is formed by the delta and b chains.

It is found in the cell inner membrane. Its function is as follows. F(1)F(0) ATP synthase produces ATP from ADP in the presence of a proton or sodium gradient. F-type ATPases consist of two structural domains, F(1) containing the extramembraneous catalytic core and F(0) containing the membrane proton channel, linked together by a central stalk and a peripheral stalk. During catalysis, ATP synthesis in the catalytic domain of F(1) is coupled via a rotary mechanism of the central stalk subunits to proton translocation. In terms of biological role, this protein is part of the stalk that links CF(0) to CF(1). It either transmits conformational changes from CF(0) to CF(1) or is implicated in proton conduction. The sequence is that of ATP synthase subunit delta from Shewanella sediminis (strain HAW-EB3).